We begin with the raw amino-acid sequence, 180 residues long: Lipid droplet coating protein Cap20 (180 aa).

It belongs to the perilipin family. Interacts with class I hydrophobin Hydr1. Interacts also with the cAMP-dependent protein kinase catalytic subunit PkaC1.

It localises to the lipid droplet. Its function is as follows. Lipid droplet coating protein that regulates lipid metabolism, appressorial turgor pressure, and virulence. Mature appressoria with high turgor pressure are essential to penetrate the leaf surface. The protein is Lipid droplet coating protein Cap20 of Colletotrichum siamense (Anthracnose fungus).